Reading from the N-terminus, the 537-residue chain is 2-isopropylmalate synthase (537 aa).

Residues 8–269 (VLIFDTTLRD…YFNGYLGRAE (262 aa)) enclose the Pyruvate carboxyltransferase domain. 4 residues coordinate Mn(2+): Asp17, His208, His210, and Asn244. The tract at residues 408 to 537 (QLAGVQVSCG…QRAPLPAPAL (130 aa)) is regulatory domain.

The protein belongs to the alpha-IPM synthase/homocitrate synthase family. LeuA type 1 subfamily. As to quaternary structure, homodimer. Requires Mn(2+) as cofactor.

Its subcellular location is the cytoplasm. It catalyses the reaction 3-methyl-2-oxobutanoate + acetyl-CoA + H2O = (2S)-2-isopropylmalate + CoA + H(+). It participates in amino-acid biosynthesis; L-leucine biosynthesis; L-leucine from 3-methyl-2-oxobutanoate: step 1/4. In terms of biological role, catalyzes the condensation of the acetyl group of acetyl-CoA with 3-methyl-2-oxobutanoate (2-ketoisovalerate) to form 3-carboxy-3-hydroxy-4-methylpentanoate (2-isopropylmalate). The sequence is that of 2-isopropylmalate synthase from Synechococcus sp. (strain RCC307).